A 467-amino-acid chain; its full sequence is Indoleacetamide hydrolase (467 aa).

Catalysis depends on charge relay system residues K74 and S149. Residue S173 is the Acyl-ester intermediate of the active site.

The protein belongs to the amidase family.

It functions in the pathway plant hormone metabolism; auxin biosynthesis. Functionally, hydrolyzes indole-3-acetamide (IAM) into indole-3-acetic acid (IAA). The chain is Indoleacetamide hydrolase (tms2) from Rhizobium radiobacter (Agrobacterium tumefaciens).